Reading from the N-terminus, the 106-residue chain is Thiosulfate sulfurtransferase GlpE (106 aa).

The Rhodanese domain maps to 17–105 (EQNEARLVDI…SYRAELPVIA (89 aa)). C65 acts as the Cysteine persulfide intermediate in catalysis.

It belongs to the GlpE family.

It is found in the cytoplasm. It carries out the reaction thiosulfate + hydrogen cyanide = thiocyanate + sulfite + 2 H(+). The enzyme catalyses thiosulfate + [thioredoxin]-dithiol = [thioredoxin]-disulfide + hydrogen sulfide + sulfite + 2 H(+). In terms of biological role, transferase that catalyzes the transfer of sulfur from thiosulfate to thiophilic acceptors such as cyanide or dithiols. May function in a CysM-independent thiosulfate assimilation pathway by catalyzing the conversion of thiosulfate to sulfite, which can then be used for L-cysteine biosynthesis. The polypeptide is Thiosulfate sulfurtransferase GlpE (Vibrio atlanticus (strain LGP32) (Vibrio splendidus (strain Mel32))).